The chain runs to 186 residues: Dynactin subunit 3 (186 aa).

The residue at position 2 (Ala-2) is an N-acetylalanine. Residues 46–66 (NIASKRERVKILYKKIEDLIK) adopt a coiled-coil conformation.

This sequence belongs to the dynactin subunit 3 family. Subunit of dynactin, a multiprotein complex part of a tripartite complex with dynein and a adapter, such as BICDL1, BICD2 or HOOK3. The dynactin complex is built around ACTR1A/ACTB filament and consists of an actin-related filament composed of a shoulder domain, a pointed end and a barbed end. Its length is defined by its flexible shoulder domain. The soulder is composed of 2 DCTN1 subunits, 4 DCTN2 and 2 DCTN3. The 4 DCNT2 (via N-terminus) bind the ACTR1A filament and act as molecular rulers to determine the length. The pointed end is important for binding dynein-dynactin cargo adapters. Consists of 4 subunits: ACTR10, DCNT4, DCTN5 and DCTN6. The barbed end is composed of a CAPZA1:CAPZB heterodimers, which binds ACTR1A/ACTB filament and dynactin and stabilizes dynactin.

It is found in the cytoplasm. It localises to the cytoskeleton. The protein resides in the microtubule organizing center. Its subcellular location is the centrosome. The protein localises to the chromosome. It is found in the centromere. It localises to the kinetochore. The protein resides in the spindle. Its subcellular location is the cleavage furrow. The protein localises to the midbody. Functionally, part of the dynactin complex that activates the molecular motor dynein for ultra-processive transport along microtubules. Together with dynein may be involved in spindle assembly and cytokinesis. This Mus musculus (Mouse) protein is Dynactin subunit 3.